The following is a 397-amino-acid chain: Monooxygenase 1 (397 aa).

This sequence belongs to the 3-hydroxybenzoate 6-hydroxylase family. As to quaternary structure, monomer. FAD serves as cofactor. Expressed in seedlings, roots, leaves, flowers and siliques.

The chain is Monooxygenase 1 from Arabidopsis thaliana (Mouse-ear cress).